The primary structure comprises 217 residues: tRNA 5-hydroxyuridine methyltransferase (217 aa).

S-adenosyl-L-methionine-binding positions include Met38, Ser68, Glu85, 113–114 (DA), and Asp133. The Mg(2+) site is built by Asp133, Asp159, and Asn160.

This sequence belongs to the class I-like SAM-binding methyltransferase superfamily. Cation-dependent O-methyltransferase family. As to quaternary structure, homodimer.

It carries out the reaction 5-hydroxyuridine(34) in tRNA + S-adenosyl-L-methionine = 5-methoxyuridine(34) in tRNA + S-adenosyl-L-homocysteine + H(+). Its function is as follows. Catalyzes the methylation of 5-hydroxyuridine (ho5U) to form 5-methoxyuridine (mo5U) at position 34 in tRNAs. This is tRNA 5-hydroxyuridine methyltransferase from Bacillus subtilis (strain 168).